Here is a 173-residue protein sequence, read N- to C-terminus: Helix-loop-helix protein lin-22 (173 aa).

Residues 21 to 34 (KKIKNKPLMEKKRR) form a basic motif region. Residues 21–78 (KKIKNKPLMEKKRRARINKSLSQLKQILIQDEHKNSIQHSKWEKADILEMAVEYLQQL) form the bHLH domain. A helix-loop-helix motif region spans residues 35-78 (ARINKSLSQLKQILIQDEHKNSIQHSKWEKADILEMAVEYLQQL). The span at 83-95 (PCSLSPSTSSIST) shows a compositional bias: low complexity. The disordered stretch occupies residues 83–102 (PCSLSPSTSSISTPPTPKEE).

Expressed mostly in the seam (stem) cells and hypodermis (hyp7), but also to a lesser extent in the intestine.

It is found in the nucleus. In terms of biological role, probable transcription factor. During development, required for cell fate specification, probably by promoting or repressing expression of genes involved in specific cell fate. Involved in specifying lineages derived from the epidermal stem cells of the lateral ectoderm, known as seam cells. Modulates symmetric divisions of seam cells, perhaps in concert with the Wnt signaling pathway. May repress expression of homeobox genes mab-5, egl-5 and lin-39. In Caenorhabditis elegans, this protein is Helix-loop-helix protein lin-22.